We begin with the raw amino-acid sequence, 223 residues long: V-type ATP synthase subunit D (223 aa).

Residues 203–223 are disordered; sequence AREAEEEGGRPNPQVEIGAGL.

It belongs to the V-ATPase D subunit family.

Its function is as follows. Produces ATP from ADP in the presence of a proton gradient across the membrane. In Thermus thermophilus (strain ATCC BAA-163 / DSM 7039 / HB27), this protein is V-type ATP synthase subunit D.